The sequence spans 560 residues: Interferon alpha/beta receptor 1 (560 aa).

Positions 1–24 (MLSLLGATTLMLVAGRWVLPAASG) are cleaved as a signal peptide. At 25–437 (EANLKSENVE…EKTKPGNTSK (413 aa)) the chain is on the extracellular side. 2 N-linked (GlcNAc...) asparagine glycosylation sites follow: Asn-47 and Asn-55. Cys-76 and Cys-84 are joined by a disulfide. 4 N-linked (GlcNAc...) asparagine glycosylation sites follow: Asn-85, Asn-108, Asn-109, and Asn-172. Fibronectin type-III domains are found at residues 126–226 (QIGP…TTER), 231–329 (SPEN…TEVK), and 333–433 (FPPV…TKPG). An intrachain disulfide couples Cys-199 to Cys-220. Asn-222, Asn-285, Asn-313, Asn-359, and Asn-377 each carry an N-linked (GlcNAc...) asparagine glycan. A disulfide bond links Cys-283 and Cys-291. Cysteines 404 and 427 form a disulfide. An N-linked (GlcNAc...) asparagine glycan is attached at Asn-434. The helical transmembrane segment at 438–458 (TWLIAGICTALFSILVVIYVV) threads the bilayer. The Cytoplasmic portion of the chain corresponds to 459–560 (RVFLRCVKYV…SEEFLQQDSV (102 aa)). Residue Cys-464 is the site of S-palmitoyl cysteine attachment. Tyr-467 and Tyr-482 each carry phosphotyrosine; by TYK2. Residues 492-501 (LLSTSEEQTE) are important for interaction with TYK2. Ser-496 and Ser-536 each carry phosphoserine. The disordered stretch occupies residues 524–560 (VHEEYNSQASQDSGNYSNEDENSGSKISEEFLQQDSV). A compositionally biased stretch (polar residues) spans 529–540 (NSQASQDSGNYS).

This sequence belongs to the type II cytokine receptor family. Heterodimer with IFNAR2; forming the receptor for type I interferon. Interacts with TYK2. Interacts with STAT1 and STAT2; the interaction requires its phosphorylation at Tyr-482. Interacts (serine-phosphorylated form) with FBXW11, the substrate recognition component of a SCF (SKP1-CUL1-F-box protein) E3 ubiquitin-protein ligase complex. Interacts with SHMT2; this promotes interaction with ABRAXAS2 and the BRISC complex. Interacts with TRIM10; this interaction prevents association between IFNAR1 and TYK2. In terms of processing, ubiquitinated, leading to its internalization and degradation. Polyubiquitinated via 'Lys-48'-linked and 'Lys-63'-linked ubiquitin chains, leading to receptor internalization and lysosomal degradation. The 'Lys-63'-linked ubiquitin chains are cleaved off by the BRISC complex. Phosphorylated on tyrosine residues in response to interferon-binding: phosphorylation by TYK2 tyrosine kinase creates docking sites for STAT proteins. Phosphorylated on serine residues in response to interferon binding; this promotes interaction with FBXW11 and ubiquitination. Post-translationally, palmitoylation at Cys-464 is required for the activation of STAT1 and STAT2. As to expression, expressed in the endometrium. Expressed in all tissues examined except conceptus at day 15 of pregnancy.

Its subcellular location is the cell membrane. The protein resides in the late endosome. It is found in the lysosome. Together with IFNAR2, forms the heterodimeric receptor for type I interferons (including interferons alpha, beta, epsilon, omega and kappa). Type I interferon binding activates the JAK-STAT signaling cascade, resulting in transcriptional activation or repression of interferon-regulated genes that encode the effectors of the interferon response. Mechanistically, type I interferon-binding brings the IFNAR1 and IFNAR2 subunits into close proximity with one another, driving their associated Janus kinases (JAKs) (TYK2 bound to IFNAR1 and JAK1 bound to IFNAR2) to cross-phosphorylate one another. The activated kinases phosphorylate specific tyrosine residues on the intracellular domains of IFNAR1 and IFNAR2, forming docking sites for the STAT transcription factors. STAT proteins are then phosphorylated by the JAKs, promoting their translocation into the nucleus to regulate expression of interferon-regulated genes. Can also act independently of IFNAR2: form an active IFNB1 receptor by itself and activate a signaling cascade that does not involve activation of the JAK-STAT pathway. This Ovis aries (Sheep) protein is Interferon alpha/beta receptor 1 (IFNAR1).